The primary structure comprises 278 residues: Transmembrane protein 45B (278 aa).

7 consecutive transmembrane segments (helical) span residues 7–27, 49–69, 95–115, 117–137, 149–169, 183–203, and 215–235; these read HALP…KYPL, IIEG…EQFV, YLFF…FHIV, LGLD…LFYF, IHSL…LEVI, LLIL…PPFG, and IMFI…IVAI. Residues S273 and S275 each carry the phosphoserine modification.

This sequence belongs to the TMEM45 family.

Its subcellular location is the endosome membrane. The protein resides in the lysosome membrane. It is found in the golgi apparatus. The protein localises to the trans-Golgi network membrane. In terms of biological role, plays a role in innate immunity. The protein is Transmembrane protein 45B (Tmem45b) of Mus musculus (Mouse).